The primary structure comprises 414 residues: Apolipoprotein N-acyltransferase (414 aa).

A run of 6 helical transmembrane segments spans residues 19-39, 40-60, 63-83, 91-111, 121-141, and 153-173; these read GIAL…HFGI, TSPL…LKLP, SGFA…ALSF, LIPF…SMAL, LLLW…VPEV, and LSFG…QRWL. The 213-residue stretch at 202-414 folds into the CN hydrolase domain; sequence IETHIPQEIR…NRSPSGIIAP (213 aa). Glu-243 functions as the Proton acceptor in the catalytic mechanism. Lys-298 is an active-site residue. The Nucleophile role is filled by Cys-351.

It belongs to the CN hydrolase family. Apolipoprotein N-acyltransferase subfamily.

It localises to the cell inner membrane. The catalysed reaction is N-terminal S-1,2-diacyl-sn-glyceryl-L-cysteinyl-[lipoprotein] + a glycerophospholipid = N-acyl-S-1,2-diacyl-sn-glyceryl-L-cysteinyl-[lipoprotein] + a 2-acyl-sn-glycero-3-phospholipid + H(+). It functions in the pathway protein modification; lipoprotein biosynthesis (N-acyl transfer). Its function is as follows. Catalyzes the phospholipid dependent N-acylation of the N-terminal cysteine of apolipoprotein, the last step in lipoprotein maturation. The protein is Apolipoprotein N-acyltransferase of Wolinella succinogenes (strain ATCC 29543 / DSM 1740 / CCUG 13145 / JCM 31913 / LMG 7466 / NCTC 11488 / FDC 602W) (Vibrio succinogenes).